Consider the following 158-residue polypeptide: Cyclic pyranopterin monophosphate synthase (158 aa).

Substrate is bound by residues Leu-75–His-77 and Met-113–Glu-114. Residue Asp-128 is part of the active site.

This sequence belongs to the MoaC family. Homohexamer; trimer of dimers.

The enzyme catalyses (8S)-3',8-cyclo-7,8-dihydroguanosine 5'-triphosphate = cyclic pyranopterin phosphate + diphosphate. The protein operates within cofactor biosynthesis; molybdopterin biosynthesis. In terms of biological role, catalyzes the conversion of (8S)-3',8-cyclo-7,8-dihydroguanosine 5'-triphosphate to cyclic pyranopterin monophosphate (cPMP). This chain is Cyclic pyranopterin monophosphate synthase, found in Vibrio campbellii (strain ATCC BAA-1116).